Consider the following 303-residue polypeptide: Probable cell division protein WhiA (303 aa).

Positions 272 to 303 (SIQQIADSIEPPLTKSGVNHRLRKINKIADDL) form a DNA-binding region, H-T-H motif.

This sequence belongs to the WhiA family.

Involved in cell division and chromosome segregation. This chain is Probable cell division protein WhiA, found in Streptococcus thermophilus (strain ATCC BAA-250 / LMG 18311).